Consider the following 190-residue polypeptide: Protein GrpE (190 aa).

The span at 1-10 (MKKHVTEEQK) shows a compositional bias: basic and acidic residues. The segment at 1 to 42 (MKKHVTEEQKTSAAPEAEQASPESSAAEAATPEERISRLEEQ) is disordered. Residues 12-30 (SAAPEAEQASPESSAAEAA) are compositionally biased toward low complexity. Residues 32-42 (PEERISRLEEQ) are compositionally biased toward basic and acidic residues.

This sequence belongs to the GrpE family. In terms of assembly, homodimer.

The protein resides in the cytoplasm. Functionally, participates actively in the response to hyperosmotic and heat shock by preventing the aggregation of stress-denatured proteins, in association with DnaK and GrpE. It is the nucleotide exchange factor for DnaK and may function as a thermosensor. Unfolded proteins bind initially to DnaJ; upon interaction with the DnaJ-bound protein, DnaK hydrolyzes its bound ATP, resulting in the formation of a stable complex. GrpE releases ADP from DnaK; ATP binding to DnaK triggers the release of the substrate protein, thus completing the reaction cycle. Several rounds of ATP-dependent interactions between DnaJ, DnaK and GrpE are required for fully efficient folding. This chain is Protein GrpE, found in Pelobacter propionicus (strain DSM 2379 / NBRC 103807 / OttBd1).